A 491-amino-acid polypeptide reads, in one-letter code: 2,3-bisphosphoglycerate-independent phosphoglycerate mutase (491 aa).

Mn(2+) contacts are provided by aspartate 11 and serine 61. The active-site Phosphoserine intermediate is the serine 61. Substrate-binding positions include histidine 118, 147-148 (RD), arginine 177, arginine 183, 248-251 (RSDR), and lysine 320. The Mn(2+) site is built by aspartate 386, histidine 390, aspartate 427, histidine 428, and histidine 445.

The protein belongs to the BPG-independent phosphoglycerate mutase family. In terms of assembly, monomer. Mn(2+) serves as cofactor.

The enzyme catalyses (2R)-2-phosphoglycerate = (2R)-3-phosphoglycerate. It participates in carbohydrate degradation; glycolysis; pyruvate from D-glyceraldehyde 3-phosphate: step 3/5. Catalyzes the interconversion of 2-phosphoglycerate and 3-phosphoglycerate. The protein is 2,3-bisphosphoglycerate-independent phosphoglycerate mutase of Sulfurimonas denitrificans (strain ATCC 33889 / DSM 1251) (Thiomicrospira denitrificans (strain ATCC 33889 / DSM 1251)).